Here is a 486-residue protein sequence, read N- to C-terminus: Maternal protein exuperantia (486 aa).

Disordered stretches follow at residues 202-233 and 386-477; these read NARV…RDEF and STIR…ISLP. Basic and acidic residues predominate over residues 218 to 233; it reads ADKHVKNGLQKERDEF. Over residues 387–397 the composition is skewed to basic residues; the sequence is TIRRRNKRNTP. Composition is skewed to polar residues over residues 420-437 and 464-476; these read KSQS…TPSP and SALN…SISL.

Functionally, ensures the proper localization of the mRNA of the bicoid gene to the anterior regions of the oocyte thus playing a fundamental role in the establishment of the polarity of the oocyte. May bind the bcd mRNA. This is Maternal protein exuperantia (exu) from Drosophila virilis (Fruit fly).